The following is a 260-amino-acid chain: Carbonic anhydrase 3 (260 aa).

A2 bears the N-acetylalanine mark. An Alpha-carbonic anhydrase domain is found at 3-259; that stretch reads KEWGYADHNG…LKGRVVRASF (257 aa). Phosphoserine occurs at positions 29, 43, 50, and 55. The tract at residues 64–67 is involved in proton transfer; sequence RTCR. At T73 the chain carries Phosphothreonine. Residues H94, H96, and H119 each contribute to the Zn(2+) site. A Phosphotyrosine modification is found at Y127. A phosphothreonine mark is found at T129 and T176. S-glutathionyl cysteine occurs at positions 182 and 187. Substrate is bound at residue 198–199; the sequence is TT. T216 carries the phosphothreonine modification. S219 carries the phosphoserine modification.

Belongs to the alpha-carbonic anhydrase family. The cofactor is Zn(2+). Post-translationally, S-thiolated both by thiol-disulfide exchange with glutathione disulfide and by oxyradical-initiated S-thiolation with reduced glutathione. In terms of processing, S-glutathionylated in hepatocytes under oxidative stress.

The protein resides in the cytoplasm. The catalysed reaction is hydrogencarbonate + H(+) = CO2 + H2O. Inhibited by acetazolamide. In terms of biological role, reversible hydration of carbon dioxide. This chain is Carbonic anhydrase 3 (CA3), found in Equus caballus (Horse).